A 463-amino-acid chain; its full sequence is Asparagine--tRNA ligase (463 aa).

Belongs to the class-II aminoacyl-tRNA synthetase family. As to quaternary structure, homodimer.

The protein resides in the cytoplasm. It carries out the reaction tRNA(Asn) + L-asparagine + ATP = L-asparaginyl-tRNA(Asn) + AMP + diphosphate + H(+). The polypeptide is Asparagine--tRNA ligase (Bacillus cereus (strain ZK / E33L)).